The primary structure comprises 115 residues: Guanylin (115 aa).

The N-terminal stretch at 1-23 (MNAWLLSVLCLLGALAVLVEGVT) is a signal peptide. The propeptide occupies 24 to 100 (VQDGDLSFPL…LQRLEAIAQD (77 aa)). Disulfide bonds link Cys-69–Cys-82, Cys-104–Cys-112, and Cys-107–Cys-115.

This sequence belongs to the guanylin family. Intestine and in low abundance in adrenal gland, kidney, and uterus/oviduct.

It localises to the secreted. Endogenous activator of intestinal guanylate cyclase. It stimulates this enzyme through the same receptor binding region as the heat-stable enterotoxins. This chain is Guanylin (Guca2a), found in Rattus norvegicus (Rat).